A 342-amino-acid chain; its full sequence is Deoxyguanosinetriphosphate triphosphohydrolase-like protein (342 aa).

The region spanning 75–190 (RLVHTLEVSQ…VRFADKIAYV (116 aa)) is the HD domain.

This sequence belongs to the dGTPase family. Type 2 subfamily.

This Clostridium perfringens (strain 13 / Type A) protein is Deoxyguanosinetriphosphate triphosphohydrolase-like protein.